The chain runs to 152 residues: Aspartate carbamoyltransferase regulatory chain (152 aa).

Positions 107, 112, 136, and 139 each coordinate Zn(2+).

This sequence belongs to the PyrI family. As to quaternary structure, contains catalytic and regulatory chains. It depends on Zn(2+) as a cofactor.

Involved in allosteric regulation of aspartate carbamoyltransferase. The polypeptide is Aspartate carbamoyltransferase regulatory chain (Chromobacterium violaceum (strain ATCC 12472 / DSM 30191 / JCM 1249 / CCUG 213 / NBRC 12614 / NCIMB 9131 / NCTC 9757 / MK)).